A 217-amino-acid chain; its full sequence is GTP cyclohydrolase 1 (217 aa).

3 residues coordinate Zn(2+): Cys109, His112, and Cys180.

This sequence belongs to the GTP cyclohydrolase I family. In terms of assembly, toroid-shaped homodecamer, composed of two pentamers of five dimers.

The catalysed reaction is GTP + H2O = 7,8-dihydroneopterin 3'-triphosphate + formate + H(+). It functions in the pathway cofactor biosynthesis; 7,8-dihydroneopterin triphosphate biosynthesis; 7,8-dihydroneopterin triphosphate from GTP: step 1/1. This is GTP cyclohydrolase 1 from Vibrio vulnificus (strain CMCP6).